We begin with the raw amino-acid sequence, 185 residues long: Casparian strip membrane protein 5 (185 aa).

The Cytoplasmic segment spans residues 1–25 (MKAEAVESGEASTIIAAPKRGINRG). A helical transmembrane segment spans residues 26-46 (ISIADLILRGVAAIGTFASAL). Topologically, residues 47–75 (TMGTTSETLTIFTQPIMIRAKYNDLPSLT) are extracellular. The chain crosses the membrane as a helical span at residues 76–96 (FFVIANSIVCGYLVLSIPLSI). Over 97 to 108 (SHFIRREARITR) the chain is Cytoplasmic. A helical transmembrane segment spans residues 109-129 (IILVIFDTAMVELLTAGASAA). The Extracellular segment spans residues 130 to 160 (TVVVYLAHKRNANWLAICQQFNNFCERISGS). The helical transmembrane segment at 161-181 (LIGSFASIIMIMLIIITSAVA) threads the bilayer. Topologically, residues 182–185 (LSRH) are cytoplasmic.

The protein belongs to the Casparian strip membrane proteins (CASP) family. As to quaternary structure, homodimer and heterodimers.

Its subcellular location is the cell membrane. Functionally, regulates membrane-cell wall junctions and localized cell wall deposition. Required for establishment of the Casparian strip membrane domain (CSD) and the subsequent formation of Casparian strips, a cell wall modification of the root endodermis that determines an apoplastic barrier between the intraorganismal apoplasm and the extraorganismal apoplasm and prevents lateral diffusion. The chain is Casparian strip membrane protein 5 from Populus trichocarpa (Western balsam poplar).